The primary structure comprises 167 residues: NAD(P)H-quinone oxidoreductase subunit I, chloroplastic (167 aa).

4Fe-4S ferredoxin-type domains follow at residues glycine 55 to lysine 84 and leucine 95 to glutamate 124. [4Fe-4S] cluster is bound by residues cysteine 64, cysteine 67, cysteine 70, cysteine 74, cysteine 104, cysteine 107, cysteine 110, and cysteine 114.

This sequence belongs to the complex I 23 kDa subunit family. NDH is composed of at least 16 different subunits, 5 of which are encoded in the nucleus. [4Fe-4S] cluster serves as cofactor.

Its subcellular location is the plastid. It localises to the chloroplast thylakoid membrane. The enzyme catalyses a plastoquinone + NADH + (n+1) H(+)(in) = a plastoquinol + NAD(+) + n H(+)(out). The catalysed reaction is a plastoquinone + NADPH + (n+1) H(+)(in) = a plastoquinol + NADP(+) + n H(+)(out). Its function is as follows. NDH shuttles electrons from NAD(P)H:plastoquinone, via FMN and iron-sulfur (Fe-S) centers, to quinones in the photosynthetic chain and possibly in a chloroplast respiratory chain. The immediate electron acceptor for the enzyme in this species is believed to be plastoquinone. Couples the redox reaction to proton translocation, and thus conserves the redox energy in a proton gradient. The chain is NAD(P)H-quinone oxidoreductase subunit I, chloroplastic from Pelargonium hortorum (Common geranium).